The sequence spans 95 residues: Progonadoliberin-1 (95 aa).

Residues 1–25 (MAPQTSNLWILLLLVVVMMMSQGCC) form the signal peptide. The residue at position 26 (Gln-26) is a Pyrrolidone carboxylic acid. Gly-35 is modified (glycine amide).

It belongs to the GnRH family.

It is found in the secreted. In terms of biological role, stimulates the secretion of gonadotropins. This Sparus aurata (Gilthead sea bream) protein is Progonadoliberin-1 (gnrh1).